A 67-amino-acid chain; its full sequence is Large ribosomal subunit protein bL32 (67 aa).

Positions 1-19 are enriched in basic residues; sequence MAVPKRKMSRANTRMRRSQ. The segment at 1-22 is disordered; that stretch reads MAVPKRKMSRANTRMRRSQWKA.

Belongs to the bacterial ribosomal protein bL32 family.

This chain is Large ribosomal subunit protein bL32, found in Kocuria rhizophila (strain ATCC 9341 / DSM 348 / NBRC 103217 / DC2201).